Reading from the N-terminus, the 785-residue chain is (+)-copalyl diphosphate synthase 3, chloroplastic (785 aa).

Residue Lys238 participates in substrate binding. Asp371 and Asp373 together coordinate Mg(2+). The short motif at Asp371 to Asp374 is the DXDD motif element. Residue Lys457 coordinates substrate.

Belongs to the terpene synthase family. Mg(2+) is required as a cofactor. In terms of tissue distribution, present in both leaves and flowers, with higher levels in leaves.

Its subcellular location is the plastid. The protein localises to the chloroplast. The enzyme catalyses (2E,6E,10E)-geranylgeranyl diphosphate = (+)-copalyl diphosphate. Its pathway is secondary metabolite biosynthesis; terpenoid biosynthesis. Its function is as follows. Involved in the biosynthesis of labdane-type diterpenoid including marrubiin and other labdane-related furanoid diterpenoids with potential applications as anti-diabetics, analgesics or vasorelaxants. Terpene synthase that produces (+)-copalyl diphosphate ((+)-CPP) from geranylgeranyl diphosphate (GGPP). The sequence is that of (+)-copalyl diphosphate synthase 3, chloroplastic from Marrubium vulgare (White horehound).